Here is a 164-residue protein sequence, read N- to C-terminus: CB1 cannabinoid receptor-interacting protein 1 (164 aa).

The protein belongs to the CNRIP family. In terms of assembly, interacts with the cannabinoid receptor CNR1 (via C-terminus). Does not interact with cannabinoid receptor CNR2.

Its function is as follows. Suppresses cannabinoid receptor CNR1-mediated tonic inhibition of voltage-gated calcium channels. The chain is CB1 cannabinoid receptor-interacting protein 1 (CNRIP1) from Bos taurus (Bovine).